Reading from the N-terminus, the 63-residue chain is Putative transmembrane protein ORF63 (63 aa).

Over 1-8 (MQSGNFTL) the chain is Extracellular. A helical transmembrane segment spans residues 9–29 (EVIMYLINSILAFIMIFFTFV). Topologically, residues 30–31 (NP) are cytoplasmic. Residues 32-52 (SLLKCQYWTYILVALITAIIF) form a helical membrane-spanning segment. Residues 53–63 (HTGSKVGKSSG) lie on the Extracellular side of the membrane.

It localises to the host membrane. The chain is Putative transmembrane protein ORF63 from Acidianus filamentous virus 1 (isolate United States/Yellowstone) (AFV-1).